A 238-amino-acid chain; its full sequence is 1-(5-phosphoribosyl)-5-[(5-phosphoribosylamino)methylideneamino] imidazole-4-carboxamide isomerase (238 aa).

D8 functions as the Proton acceptor in the catalytic mechanism. D129 (proton donor) is an active-site residue.

This sequence belongs to the HisA/HisF family.

It localises to the cytoplasm. The catalysed reaction is 1-(5-phospho-beta-D-ribosyl)-5-[(5-phospho-beta-D-ribosylamino)methylideneamino]imidazole-4-carboxamide = 5-[(5-phospho-1-deoxy-D-ribulos-1-ylimino)methylamino]-1-(5-phospho-beta-D-ribosyl)imidazole-4-carboxamide. It participates in amino-acid biosynthesis; L-histidine biosynthesis; L-histidine from 5-phospho-alpha-D-ribose 1-diphosphate: step 4/9. This is 1-(5-phosphoribosyl)-5-[(5-phosphoribosylamino)methylideneamino] imidazole-4-carboxamide isomerase from Clostridium novyi (strain NT).